The chain runs to 633 residues: Alpha-amylase (633 aa).

Residue E123 is the Nucleophile of the active site. Catalysis depends on D214, which acts as the Proton donor.

Belongs to the glycosyl hydrolase 57 family.

It catalyses the reaction Endohydrolysis of (1-&gt;4)-alpha-D-glucosidic linkages in polysaccharides containing three or more (1-&gt;4)-alpha-linked D-glucose units.. The protein is Alpha-amylase (amyA) of Pyrococcus horikoshii (strain ATCC 700860 / DSM 12428 / JCM 9974 / NBRC 100139 / OT-3).